The primary structure comprises 443 residues: Thymidine phosphorylase (443 aa).

Belongs to the thymidine/pyrimidine-nucleoside phosphorylase family. In terms of assembly, homodimer.

The catalysed reaction is thymidine + phosphate = 2-deoxy-alpha-D-ribose 1-phosphate + thymine. It participates in pyrimidine metabolism; dTMP biosynthesis via salvage pathway; dTMP from thymine: step 1/2. The enzymes which catalyze the reversible phosphorolysis of pyrimidine nucleosides are involved in the degradation of these compounds and in their utilization as carbon and energy sources, or in the rescue of pyrimidine bases for nucleotide synthesis. This chain is Thymidine phosphorylase, found in Shewanella sediminis (strain HAW-EB3).